A 229-amino-acid chain; its full sequence is MSSLKKILGLKGKGKKSKKLGIAPPPYEEDTSMEYAPSAPIDKSYFGVDEMDTHDPNQLRYEKFFFTVKLTVRSNRPFRTYSDVAAAVSHWDHMYIGMAGKRPFYKILAFLGSSNLKATPAVLADQGQPEYHAHCEGRAYLPHRMGKTPPMLNVPEHFRRPFNIGLYKGTIELTMTIYDDESLEAAPMIWDHFNSSKFSDFREKALMFGLIVEKKASGAWILDSVSHFK.

The span at 1–10 (MSSLKKILGL) shows a compositional bias: low complexity. The disordered stretch occupies residues 1–23 (MSSLKKILGLKGKGKKSKKLGIA). The dynamin binding signature appears at 2–4 (SSL). The short motif at 24–27 (PPPY) is the PPXY motif element. The PTAP/PSAP motif signature appears at 37–40 (PSAP).

Belongs to the vesiculoviruses matrix protein family. Homomultimer. Interacts with viral nucleocapsid; this interaction contributes to the virion assembly. Interacts with the viral envelope glycoprotein; this interaction contributes to the virion assembly. Interacts with host RAE1-NUP98 complex. Interacts with host NEDD4 and TSG101. Interacts with host dynamin. Interacts with host NDUFAF4; the interaction inhibits viral propagation and is independent of interferon activation. Interacts with host GTF2H5; the interaction may inhibit host transcription. In terms of processing, phosphorylated by host.

It localises to the virion. It is found in the host endomembrane system. The protein localises to the host nucleus membrane. The protein resides in the host nucleus. Its subcellular location is the host cytoplasm. Forms a double layer around the helical nucleocapsid, the inner matrix layer binding to the N helix and the outer matrix layer binding to the envelope glycoprotein. Plays a major role in assembly and budding of virion, by recruiting cellular partners of the ESCRT complexes that play a key role in releasing the budding particle from the host membrane. Condensates the ribonucleocapsid core during virus assembly. Inhibits the host mRNA nuclear export thereby inducing the shut off of cellular transcription and preventing the interferon signaling and the establishment of antiviral state in infected cells. This shutoff presumably inhibits interferon signaling and thus establishment of antiviral state in virus infected cells. Induces cell-rounding, cytoskeleton disorganization and apoptosis in infected cell. Inhibits host transcription, possibly through interaction with host DNA repair factor IIH/TFIIH GTF2H5 subunit. In Vesicular stomatitis Indiana virus (strain 98COE North America) (VSIV), this protein is Matrix protein (M).